Reading from the N-terminus, the 124-residue chain is V-type proton ATPase subunit F (124 aa).

It belongs to the V-ATPase F subunit family. As to quaternary structure, V-ATPase is a heteromultimeric enzyme composed of a peripheral catalytic V1 complex (components A to H) attached to an integral membrane V0 proton pore complex (components: a, c, c', c'', d, e, f and VOA1).

The protein resides in the vacuole membrane. In terms of biological role, subunit of the V1 complex of vacuolar(H+)-ATPase (V-ATPase), a multisubunit enzyme composed of a peripheral complex (V1) that hydrolyzes ATP and a membrane integral complex (V0) that translocates protons. V-ATPase is responsible for acidifying and maintaining the pH of intracellular compartments. This is V-type proton ATPase subunit F (vma-7) from Neurospora crassa (strain ATCC 24698 / 74-OR23-1A / CBS 708.71 / DSM 1257 / FGSC 987).